The sequence spans 385 residues: DnaJ homolog subfamily C member 28 (385 aa).

The region spanning 48–132 is the J domain; the sequence is EYYRLLNLDE…EGKFKYNTPQ (85 aa). Positions 261-318 form a coiled coil; sequence KEIKDTIEQLREALLMSRKKLGNPLSPTEQKQWAQVCEQFQEKIRKLNKRINDFNLIV.

Functionally, may have a role in protein folding or as a chaperone. The sequence is that of DnaJ homolog subfamily C member 28 (Dnajc28) from Mus musculus (Mouse).